The following is a 97-amino-acid chain: YcgL domain-containing protein PMI1171 (97 aa).

The 85-residue stretch at 3 to 87 folds into the YcgL domain; sequence MICAIYRSTK…PVESMLNAYL (85 aa).

The sequence is that of YcgL domain-containing protein PMI1171 from Proteus mirabilis (strain HI4320).